A 126-amino-acid chain; its full sequence is Ribosome-binding factor A (126 aa).

The protein belongs to the RbfA family. In terms of assembly, monomer. Binds 30S ribosomal subunits, but not 50S ribosomal subunits or 70S ribosomes.

It is found in the cytoplasm. One of several proteins that assist in the late maturation steps of the functional core of the 30S ribosomal subunit. Associates with free 30S ribosomal subunits (but not with 30S subunits that are part of 70S ribosomes or polysomes). Required for efficient processing of 16S rRNA. May interact with the 5'-terminal helix region of 16S rRNA. In Clostridioides difficile (strain 630) (Peptoclostridium difficile), this protein is Ribosome-binding factor A.